Here is a 367-residue protein sequence, read N- to C-terminus: Germination protease (367 aa).

A propeptide spanning residues 1 to 15 is cleaved from the precursor; sequence MKEPLDLSKYSVRTD.

Belongs to the peptidase A25 family. As to quaternary structure, homotetramer. In terms of processing, autoproteolytically processed. The inactive tetrameric zymogen termed p46 autoprocesses to a smaller form termed p41, which is active only during spore germination.

The enzyme catalyses Endopeptidase action with P4 Glu or Asp, P1 preferably Glu &gt; Asp, P1' hydrophobic and P2' Ala.. Its function is as follows. Initiates the rapid degradation of small, acid-soluble proteins during spore germination. This chain is Germination protease, found in Bacillus mycoides (strain KBAB4) (Bacillus weihenstephanensis).